The following is a 198-amino-acid chain: V-type ATP synthase subunit E (198 aa).

The protein belongs to the V-ATPase E subunit family.

Its function is as follows. Produces ATP from ADP in the presence of a proton gradient across the membrane. In Acetivibrio thermocellus (strain ATCC 27405 / DSM 1237 / JCM 9322 / NBRC 103400 / NCIMB 10682 / NRRL B-4536 / VPI 7372) (Clostridium thermocellum), this protein is V-type ATP synthase subunit E.